A 477-amino-acid polypeptide reads, in one-letter code: Tripartite motif-containing protein 72 (477 aa).

The Zn(2+) site is built by C14, C17, C29, H31, C34, C37, C53, C56, C86, H89, C97, D100, C105, C108, H114, and H117. Residues 14 to 57 (CPLCLQLFDAPVTAECGHSFCRACLIRVAGEPADDGTVACPCCQ) form an RING-type zinc finger. The B box-type zinc-finger motif lies at 81 to 122 (VPQGHCEEHLDPLSIYCEQDRTLVCGVCASLGSHRGHRLLPA). The stretch at 135 to 232 (QQKAQLQEAC…EKVLEEVADK (98 aa)) forms a coiled coil. An S-nitrosocysteine modification is found at C144. S255 bears the Phosphoserine mark. Residues 271 to 475 (DFKFQVWKKM…PLLLVGPDSE (205 aa)) enclose the B30.2/SPRY domain.

Belongs to the TRIM/RBCC family. As to quaternary structure, homodimer. Homooligomer; disulfide-linked. Oligomerizes on the phospholipid membrane. Interacts with DYSF and CAV3. Disulfide bond formation at Cys-242 occurs in case of membrane damage that cause the entry of the oxidized milieu of the extracellular space, resulting in homooligomerization. In terms of processing, S-nitrosylation at Cys-144 stabilizes TRIM72 and protects against oxidation-induced protein degradation and cell death.

It is found in the cell membrane. The protein resides in the sarcolemma. Its subcellular location is the cytoplasmic vesicle membrane. The catalysed reaction is S-ubiquitinyl-[E2 ubiquitin-conjugating enzyme]-L-cysteine + [acceptor protein]-L-lysine = [E2 ubiquitin-conjugating enzyme]-L-cysteine + N(6)-ubiquitinyl-[acceptor protein]-L-lysine.. The protein operates within protein modification; protein ubiquitination. With respect to regulation, specifically binds phosphatidylserine. The binding to phospholipids enhances ubiquitination activity. Muscle-specific E3 ubiquitin-protein ligase that plays a central role in cell membrane repair by nucleating the assembly of the repair machinery at injury sites. Its ubiquitination activity is mediated by E2 ubiquitin-conjugating enzymes UBE2D1, UBE2D2 and UBE2D3. Acts as a sensor of oxidation: upon membrane damage, entry of extracellular oxidative environment results in disulfide bond formation and homooligomerization at the injury site. This oligomerization acts as a nucleation site for recruitment of TRIM72-containing vesicles to the injury site, leading to membrane patch formation. Probably acts upstream of the Ca(2+)-dependent membrane resealing process. Required for transport of DYSF to sites of cell injury during repair patch formation. Regulates membrane budding and exocytosis. May be involved in the regulation of the mobility of KCNB1-containing endocytic vesicles. In Rattus norvegicus (Rat), this protein is Tripartite motif-containing protein 72.